The primary structure comprises 66 residues: Beta-toxin Cbo4 (66 aa).

Positions 1-66 (KEGYIVDYHT…VWPLPNKRCK (66 aa)) constitute an LCN-type CS-alpha/beta domain. 4 disulfides stabilise this stretch: Cys-12-Cys-65, Cys-16-Cys-41, Cys-25-Cys-46, and Cys-29-Cys-48. A Lysine amide modification is found at Lys-66.

This sequence belongs to the long (4 C-C) scorpion toxin superfamily. Sodium channel inhibitor family. Beta subfamily. As to expression, expressed by the venom gland.

It is found in the secreted. Its function is as follows. Beta toxins bind voltage-independently at site-4 of sodium channels and shift the voltage of activation toward more negative potentials thereby affecting sodium channel activation and promoting spontaneous and repetitive firing. Is active on the human voltage-gated sodium channels Nav1.4/SCN4A, Nav1.5/SCN5A and Nav1.6/SCN8A when tested at 200 nM. In vivo, is toxic to mice when intraperitoneally injected. The chain is Beta-toxin Cbo4 from Centruroides bonito (Scorpion).